The chain runs to 866 residues: Retinoblastoma-related protein 2 (866 aa).

The tract at residues Thr-274–Leu-475 is domain A. Positions Thr-274–Pro-721 are pocket. The segment at Ile-476–Asp-593 is spacer. Residues Leu-513–Gln-551 are disordered. Positions Ala-523–Asn-539 are enriched in basic and acidic residues. The tract at residues Val-594–Pro-721 is domain B. 2 disordered regions span residues Thr-731–Asn-754 and Ser-839–Thr-866. The segment covering Gly-841–Leu-850 has biased composition (polar residues).

Belongs to the retinoblastoma protein (RB) family. Ubiquitous.

Its subcellular location is the nucleus. Its function is as follows. Regulator of biological processes that recruits a histone deacetylase to control gene transcription. May play a role in the entry into mitosis, negatively regulating the cell proliferation. Formation of stable complexes with geminiviridae replication-associated proteins may create a cellular environment which favors viral DNA replication. The sequence is that of Retinoblastoma-related protein 2 (RBR2) from Zea mays (Maize).